Consider the following 274-residue polypeptide: Large ribosomal subunit protein uL2 (274 aa).

A disordered region spans residues 223-274 (VAMNPVDHPHGGGEGRTGEGRHAVDPWGNLTKGYRTRNNKRTQSMIVSRRKK). The segment covering 229–246 (DHPHGGGEGRTGEGRHAV) has biased composition (basic and acidic residues).

Belongs to the universal ribosomal protein uL2 family. In terms of assembly, part of the 50S ribosomal subunit. Forms a bridge to the 30S subunit in the 70S ribosome.

Functionally, one of the primary rRNA binding proteins. Required for association of the 30S and 50S subunits to form the 70S ribosome, for tRNA binding and peptide bond formation. It has been suggested to have peptidyltransferase activity; this is somewhat controversial. Makes several contacts with the 16S rRNA in the 70S ribosome. This is Large ribosomal subunit protein uL2 from Verminephrobacter eiseniae (strain EF01-2).